We begin with the raw amino-acid sequence, 133 residues long: Large ribosomal subunit protein eL32y (133 aa).

The protein belongs to the eukaryotic ribosomal protein eL32 family.

This chain is Large ribosomal subunit protein eL32y (RPL32B), found in Arabidopsis thaliana (Mouse-ear cress).